Here is a 288-residue protein sequence, read N- to C-terminus: Small ribosomal subunit protein uS2 (288 aa).

The protein belongs to the universal ribosomal protein uS2 family. Component of the small ribosomal subunit. Mature ribosomes consist of a small (40S) and a large (60S) subunit. The 40S subunit contains about 33 different proteins and 1 molecule of RNA (18S). The 60S subunit contains about 49 different proteins and 3 molecules of RNA (28S, 5.8S and 5S). Interacts with ribosomal protein S21.

The protein localises to the cytoplasm. Its function is as follows. Required for the assembly and/or stability of the 40S ribosomal subunit. Required for the processing of the 20S rRNA-precursor to mature 18S rRNA in a late step of the maturation of 40S ribosomal subunits. This is Small ribosomal subunit protein uS2 from Aedes aegypti (Yellowfever mosquito).